We begin with the raw amino-acid sequence, 474 residues long: Glutamine synthetase (474 aa).

Residues 14–99 (EKIELIDLKF…VCSIKEPRTG (86 aa)) enclose the GS beta-grasp domain. Residues 106–474 (PRVIAQKAID…PYEFSIYYDV (369 aa)) enclose the GS catalytic domain. Mg(2+)-binding residues include Glu-131 and Glu-133. Glu-211 contacts ATP. Glu-216 and Glu-224 together coordinate Mg(2+). Residues 268 to 269 (NG) and Gly-269 each bind L-glutamate. His-273 serves as a coordination point for Mg(2+). ATP contacts are provided by residues 275-277 (HQS) and Ser-277. L-glutamate-binding residues include Arg-325, Glu-331, and Arg-343. Arg-343, Arg-348, and Lys-357 together coordinate ATP. Position 362 (Glu-362) interacts with Mg(2+). An L-glutamate-binding site is contributed by Arg-364. An O-AMP-tyrosine modification is found at Tyr-402.

Belongs to the glutamine synthetase family. As to quaternary structure, oligomer of 12 subunits arranged in the form of two hexagons. Requires Mg(2+) as cofactor.

It localises to the cytoplasm. The enzyme catalyses L-glutamate + NH4(+) + ATP = L-glutamine + ADP + phosphate + H(+). The activity of this enzyme could be controlled by adenylation under conditions of abundant glutamine. Functionally, involved in nitrogen metabolism via ammonium assimilation. Catalyzes the ATP-dependent biosynthesis of glutamine from glutamate and ammonia. The protein is Glutamine synthetase of Nostoc sp. (strain PCC 7120 / SAG 25.82 / UTEX 2576).